A 138-amino-acid chain; its full sequence is Large ribosomal subunit protein uL16 (138 aa).

Positions 1 to 16 (MLIPRRVKHRKQHHPG) are enriched in basic residues. Residues 1-24 (MLIPRRVKHRKQHHPGRSGAATGG) are disordered.

It belongs to the universal ribosomal protein uL16 family. As to quaternary structure, part of the 50S ribosomal subunit.

In terms of biological role, binds 23S rRNA and is also seen to make contacts with the A and possibly P site tRNAs. This chain is Large ribosomal subunit protein uL16, found in Paenarthrobacter aurescens (strain TC1).